The following is a 254-amino-acid chain: MAQLTQMTNEQLRELIEAVRAAAVGAAGSAAAAGGADASRGKGNFSACTHSFGGTRDHDVVEEFIGNIETYKDVEGISDENALKGISLLFYGMASTWWQGVRKEATTWKEAIALIREHFSPTKPAYQIYMEFFQNKQDDHDPIDTFVIQKRALLAQLPSGRHDEETELDLLFGLLNIKYRKHISRHSVHTFKDLLEQGRIIEHNNQEDEEQLATAKNTRGSKRTTRCTYCSFRGHTFDNCRKRQKDRQEEQHEE.

Belongs to the ARC/ARG3.1 family. In terms of assembly, homooligomer; homooligomerizes into virion-like capsids. As to expression, expressed in a specific population of brain neurons, named E347, that are necessary and sufficient for proper body fat storage.

The protein resides in the extracellular vesicle membrane. The protein localises to the synapse. In terms of biological role, master regulator of synaptic plasticity that self-assembles into virion-like capsids that encapsulate RNAs and mediate intercellular RNA transfer from motorneurons to muscles. Arc1 protein is released from motorneurons in extracellular vesicles that mediate the transfer of Arc1 mRNA into muscle cells, where Arc1 mRNA can undergo activity-dependent translation. Intercellular transfer od Arc1 mRNA is required for synaptic plasticity at the neuromuscular junction. May play a role in energy balance: required for regulation of body fat by a specific population of brain neurons, named E347, that are necessary and sufficient for proper body fat storage. The sequence is that of Activity-regulated cytoskeleton associated protein 1 from Drosophila melanogaster (Fruit fly).